The sequence spans 259 residues: Dickkopf-related protein 2 (259 aa).

An N-terminal signal peptide occupies residues 1–33; it reads MAALMRSKDSSCCLLLLAAVLMVESSQIGSSRA. N52 is a glycosylation site (N-linked (GlcNAc...) asparagine). The segment at 78–127 is DKK-type Cys-1; the sequence is CSSDKECEVGRYCHSPHQGSSACMVCRRKKKRCHRDGMCCPSTRCNNGIC. 5 disulfide bridges follow: C183–C195, C189–C204, C194–C231, C214–C239, and C233–C256. The DKK-type Cys-2 stretch occupies residues 183–256; sequence CLRSSDCIEG…YSSKARLHVC (74 aa).

Belongs to the dickkopf family. Interacts with LRP5 and LRP6. Post-translationally, may be proteolytically processed by a furin-like protease. In terms of tissue distribution, expressed in heart, brain, skeletal muscle and lung.

Its subcellular location is the secreted. Functionally, antagonizes canonical Wnt signaling by inhibiting LRP5/6 interaction with Wnt and by forming a ternary complex with the transmembrane protein KREMEN that promotes internalization of LRP5/6. DKKs play an important role in vertebrate development, where they locally inhibit Wnt regulated processes such as antero-posterior axial patterning, limb development, somitogenesis and eye formation. In the adult, Dkks are implicated in bone formation and bone disease, cancer and Alzheimer disease. The sequence is that of Dickkopf-related protein 2 (DKK2) from Homo sapiens (Human).